The sequence spans 197 residues: Protein Hikeshi (197 aa).

The required for F-X-F-G repeats-nucleoporins recognition and nuclear import stretch occupies residues 18-55 (VAEDKFVFDLPDYENINHVVVFMLGTIPFPEGMGGSVY). Positions 124–134 (QTPVGSAAVSS) are flexible linker region involved in nuclear import of HSP70 proteins.

This sequence belongs to the OPI10 family. In terms of assembly, forms an asymmetric homodimer; required for binding and nuclear import of HSP70 proteins. Interacts with ATP-bound HSP70 proteins. Interacts with NUP62 and NUP153 (via F-X-F-G repeats). Interacts with HSPA8. In terms of tissue distribution, expressed in the central white matter of newborn and adult brain, particularly in regions where oligodendrocytes are generated.

Its subcellular location is the cytoplasm. It is found in the cytosol. The protein localises to the nucleus. Its function is as follows. Acts as a specific nuclear import carrier for HSP70 proteins following heat-shock stress: acts by mediating the nucleoporin-dependent translocation of ATP-bound HSP70 proteins into the nucleus. HSP70 proteins import is required to protect cells from heat shock damages. Does not translocate ADP-bound HSP70 proteins into the nucleus. May also be indirectly required for organization and/or function of the secretory apparatus in Club cells in lung. The protein is Protein Hikeshi of Mus musculus (Mouse).